A 297-amino-acid polypeptide reads, in one-letter code: Protoheme IX farnesyltransferase (297 aa).

Transmembrane regions (helical) follow at residues 23–43 (VTQLAVFCAVIGMFLAAPGMP), 49–69 (VFGTLGIWLLAAAAFAINCLI), 93–113 (IQVLSLSGLLGGAGMLVLYHL), 117–137 (LTMWLTFATFVGYAIIYTVIL), 144–164 (NIVIGGLSGAMPPALGWAAVA), 171–191 (AWVLVLIIFIWTPPHFWALAL), 215–235 (RLHILLYSFALLATTLLPYAI), 238–258 (SGALYLASALALGGMFVWYAW), and 275–295 (FSILYLALLFGALLIDHWVGL).

This sequence belongs to the UbiA prenyltransferase family. Protoheme IX farnesyltransferase subfamily.

The protein localises to the cell inner membrane. The catalysed reaction is heme b + (2E,6E)-farnesyl diphosphate + H2O = Fe(II)-heme o + diphosphate. It participates in porphyrin-containing compound metabolism; heme O biosynthesis; heme O from protoheme: step 1/1. Converts heme B (protoheme IX) to heme O by substitution of the vinyl group on carbon 2 of heme B porphyrin ring with a hydroxyethyl farnesyl side group. This chain is Protoheme IX farnesyltransferase, found in Bordetella bronchiseptica (strain ATCC BAA-588 / NCTC 13252 / RB50) (Alcaligenes bronchisepticus).